Reading from the N-terminus, the 572-residue chain is Proline--tRNA ligase (572 aa).

Belongs to the class-II aminoacyl-tRNA synthetase family. ProS type 1 subfamily. Homodimer.

The protein localises to the cytoplasm. It catalyses the reaction tRNA(Pro) + L-proline + ATP = L-prolyl-tRNA(Pro) + AMP + diphosphate. Catalyzes the attachment of proline to tRNA(Pro) in a two-step reaction: proline is first activated by ATP to form Pro-AMP and then transferred to the acceptor end of tRNA(Pro). As ProRS can inadvertently accommodate and process non-cognate amino acids such as alanine and cysteine, to avoid such errors it has two additional distinct editing activities against alanine. One activity is designated as 'pretransfer' editing and involves the tRNA(Pro)-independent hydrolysis of activated Ala-AMP. The other activity is designated 'posttransfer' editing and involves deacylation of mischarged Ala-tRNA(Pro). The misacylated Cys-tRNA(Pro) is not edited by ProRS. This chain is Proline--tRNA ligase, found in Shewanella amazonensis (strain ATCC BAA-1098 / SB2B).